A 92-amino-acid polypeptide reads, in one-letter code: Cell division protein FtsB (92 aa).

Residues 1 to 3 (MRL) are Cytoplasmic-facing. Residues 4 to 21 (LILILLSVLVLFQHDFWF) form a helical membrane-spanning segment. Residues 22 to 92 (GSNGFLDYRQ…VFYHIVKESK (71 aa)) are Periplasmic-facing. Positions 28–63 (DYRQNAEKIKENQAENEKLSQRNQRINAEIQGLTKG) form a coiled coil.

Belongs to the FtsB family. As to quaternary structure, part of a complex composed of FtsB, FtsL and FtsQ.

It is found in the cell inner membrane. Functionally, essential cell division protein. May link together the upstream cell division proteins, which are predominantly cytoplasmic, with the downstream cell division proteins, which are predominantly periplasmic. In Haemophilus influenzae (strain PittEE), this protein is Cell division protein FtsB.